The primary structure comprises 327 residues: Regulatory protein MsrR (327 aa).

Residues 1–18 are compositionally biased toward basic and acidic residues; the sequence is MDKETNDNEYRRQSEHRT. Residues 1 to 24 form a disordered region; the sequence is MDKETNDNEYRRQSEHRTSAPKRK. At 1-31 the chain is on the cytoplasmic side; the sequence is MDKETNDNEYRRQSEHRTSAPKRKKKKKIRK. Residues 32-52 traverse the membrane as a helical; Signal-anchor for type II membrane protein segment; it reads LPIILLIVVILLIALVVYIVH. The Extracellular segment spans residues 53-327; the sequence is SYNSGVEYAK…QAIKDFLDED (275 aa).

This sequence belongs to the LytR/CpsA/Psr (LCP) family.

The protein localises to the cell membrane. Functionally, involved in SarA attenuation. Affects resistance to oxacillin and teicoplanin, as well as the synthesis of virulence factors. The sequence is that of Regulatory protein MsrR (msrR) from Staphylococcus aureus (strain Mu50 / ATCC 700699).